A 156-amino-acid chain; its full sequence is Regulatory protein RecX (156 aa).

Belongs to the RecX family.

The protein localises to the cytoplasm. Its function is as follows. Modulates RecA activity. The chain is Regulatory protein RecX from Pseudomonas putida (strain ATCC 700007 / DSM 6899 / JCM 31910 / BCRC 17059 / LMG 24140 / F1).